We begin with the raw amino-acid sequence, 397 residues long: Protein shisa-8 (397 aa).

Positions 1–38 (MARAGARGLLGGRRPPGLRLALALRLALLLARPPSGRA) are cleaved as a signal peptide. At 39–138 (GAPEAQGPAA…APRDPGRERS (100 aa)) the chain is on the extracellular side. Asn-75 is a glycosylation site (N-linked (GlcNAc...) asparagine). A disordered region spans residues 117 to 136 (TGRPPARARDTAAPRDPGRE). Basic and acidic residues predominate over residues 123–136 (RARDTAAPRDPGRE). The helical transmembrane segment at 139–159 (HTAVYAVCGVAALLVLAGIGA) threads the bilayer. The Cytoplasmic portion of the chain corresponds to 160 to 397 (RLGLERAHSP…RTNSKTEVTV (238 aa)). 2 disordered regions span residues 182-250 (LLKQ…GGSL) and 281-303 (FPAL…PDLP). 2 stretches are compositionally biased toward pro residues: residues 188-197 (PQEPLPPTLG) and 288-303 (PRQP…PDLP).

The protein belongs to the shisa family. Interacts with AMPAR subunits GRIA1 and GRIA2.

It localises to the membrane. Functionally, may regulate trafficking and current kinetics of AMPA-type glutamate receptor (AMPAR) at synapses. The polypeptide is Protein shisa-8 (Homo sapiens (Human)).